The chain runs to 99 residues: Large ribosomal subunit protein uL23cz/uL23cy (99 aa).

Residues 1 to 37 (MGGVENPVSTDKAIRLPERKQYSSNAEPNPSKTEVKR) are disordered. A compositionally biased stretch (basic and acidic residues) spans 12–21 (KAIRLPERKQ). The segment covering 22–32 (YSSNAEPNPSK) has biased composition (polar residues).

It belongs to the universal ribosomal protein uL23 family. Part of the 50S ribosomal subunit.

The protein localises to the plastid. It is found in the chloroplast. In terms of biological role, binds to 23S rRNA. This chain is Large ribosomal subunit protein uL23cz/uL23cy (rpl23-A), found in Selaginella uncinata (Blue spike-moss).